Reading from the N-terminus, the 655-residue chain is Fidgetin-like protein 1 (655 aa).

The interval 289–313 is disordered; that stretch reads QQKKHSNQPQRNPGPLYGGGKKSLG. ATP is bound by residues A385 and 425–430; that span reads GTGKTL.

This sequence belongs to the AAA ATPase family. Hexamer. It depends on Mg(2+) as a cofactor.

It localises to the nucleus. The protein resides in the cytoplasm. It is found in the perinuclear region. The catalysed reaction is ATP + H2O = ADP + phosphate + H(+). May be involved in DNA double-strand break (DBS) repair via homologous recombination (HR). May regulate osteoblast proliferation and differentiation. This chain is Fidgetin-like protein 1 (fignl1), found in Xenopus laevis (African clawed frog).